A 143-amino-acid polypeptide reads, in one-letter code: Ribosomal RNA large subunit methyltransferase H (143 aa).

S-adenosyl-L-methionine-binding positions include glycine 95 and 111-116 (FSDLTF).

Belongs to the RNA methyltransferase RlmH family. Homodimer.

The protein resides in the cytoplasm. The catalysed reaction is pseudouridine(1915) in 23S rRNA + S-adenosyl-L-methionine = N(3)-methylpseudouridine(1915) in 23S rRNA + S-adenosyl-L-homocysteine + H(+). In terms of biological role, specifically methylates the pseudouridine at position 1915 (m3Psi1915) in 23S rRNA. The chain is Ribosomal RNA large subunit methyltransferase H from Metamycoplasma arthritidis (strain 158L3-1) (Mycoplasma arthritidis).